Reading from the N-terminus, the 139-residue chain is Large ribosomal subunit protein uL16c (139 aa).

A compositionally biased stretch (basic residues) spans 1–17; sequence MLSPKKTKFRKQHRGRM. A disordered region spans residues 1–23; that stretch reads MLSPKKTKFRKQHRGRMKGSASK.

It belongs to the universal ribosomal protein uL16 family. Part of the 50S ribosomal subunit.

Its subcellular location is the plastid. It localises to the chloroplast. The sequence is that of Large ribosomal subunit protein uL16c from Pyropia yezoensis (Susabi-nori).